The chain runs to 486 residues: Glutamate--tRNA ligase (486 aa).

The 'HIGH' region motif lies at 11-21; that stretch reads PSPTGVVHIGN. Positions 255 to 259 match the 'KMSKS' region motif; that stretch reads KLSKR. K258 contacts ATP.

The protein belongs to the class-I aminoacyl-tRNA synthetase family. Glutamate--tRNA ligase type 1 subfamily. In terms of assembly, monomer.

Its subcellular location is the cytoplasm. The enzyme catalyses tRNA(Glu) + L-glutamate + ATP = L-glutamyl-tRNA(Glu) + AMP + diphosphate. In terms of biological role, catalyzes the attachment of glutamate to tRNA(Glu) in a two-step reaction: glutamate is first activated by ATP to form Glu-AMP and then transferred to the acceptor end of tRNA(Glu). The protein is Glutamate--tRNA ligase of Streptococcus pneumoniae (strain CGSP14).